A 407-amino-acid polypeptide reads, in one-letter code: Phosphopentomutase (407 aa).

Mn(2+) contacts are provided by D10, D306, H311, D347, H348, and H359.

The protein belongs to the phosphopentomutase family. Mn(2+) is required as a cofactor.

The protein localises to the cytoplasm. The catalysed reaction is 2-deoxy-alpha-D-ribose 1-phosphate = 2-deoxy-D-ribose 5-phosphate. It carries out the reaction alpha-D-ribose 1-phosphate = D-ribose 5-phosphate. The protein operates within carbohydrate degradation; 2-deoxy-D-ribose 1-phosphate degradation; D-glyceraldehyde 3-phosphate and acetaldehyde from 2-deoxy-alpha-D-ribose 1-phosphate: step 1/2. Isomerase that catalyzes the conversion of deoxy-ribose 1-phosphate (dRib-1-P) and ribose 1-phosphate (Rib-1-P) to deoxy-ribose 5-phosphate (dRib-5-P) and ribose 5-phosphate (Rib-5-P), respectively. This is Phosphopentomutase from Salmonella schwarzengrund (strain CVM19633).